A 308-amino-acid chain; its full sequence is Methionyl-tRNA formyltransferase (308 aa).

109–112 (SLLP) lines the (6S)-5,6,7,8-tetrahydrofolate pocket.

The protein belongs to the Fmt family.

The catalysed reaction is L-methionyl-tRNA(fMet) + (6R)-10-formyltetrahydrofolate = N-formyl-L-methionyl-tRNA(fMet) + (6S)-5,6,7,8-tetrahydrofolate + H(+). Its function is as follows. Attaches a formyl group to the free amino group of methionyl-tRNA(fMet). The formyl group appears to play a dual role in the initiator identity of N-formylmethionyl-tRNA by promoting its recognition by IF2 and preventing the misappropriation of this tRNA by the elongation apparatus. The chain is Methionyl-tRNA formyltransferase from Rhizorhabdus wittichii (strain DSM 6014 / CCUG 31198 / JCM 15750 / NBRC 105917 / EY 4224 / RW1) (Sphingomonas wittichii).